The primary structure comprises 173 residues: Crossover junction endodeoxyribonuclease RuvC (173 aa).

Catalysis depends on residues Asp-8, Glu-67, and Asp-139. Asp-8, Glu-67, and Asp-139 together coordinate Mg(2+).

It belongs to the RuvC family. As to quaternary structure, homodimer which binds Holliday junction (HJ) DNA. The HJ becomes 2-fold symmetrical on binding to RuvC with unstacked arms; it has a different conformation from HJ DNA in complex with RuvA. In the full resolvosome a probable DNA-RuvA(4)-RuvB(12)-RuvC(2) complex forms which resolves the HJ. The cofactor is Mg(2+).

The protein localises to the cytoplasm. It catalyses the reaction Endonucleolytic cleavage at a junction such as a reciprocal single-stranded crossover between two homologous DNA duplexes (Holliday junction).. The RuvA-RuvB-RuvC complex processes Holliday junction (HJ) DNA during genetic recombination and DNA repair. Endonuclease that resolves HJ intermediates. Cleaves cruciform DNA by making single-stranded nicks across the HJ at symmetrical positions within the homologous arms, yielding a 5'-phosphate and a 3'-hydroxyl group; requires a central core of homology in the junction. The consensus cleavage sequence is 5'-(A/T)TT(C/G)-3'. Cleavage occurs on the 3'-side of the TT dinucleotide at the point of strand exchange. HJ branch migration catalyzed by RuvA-RuvB allows RuvC to scan DNA until it finds its consensus sequence, where it cleaves and resolves the cruciform DNA. The sequence is that of Crossover junction endodeoxyribonuclease RuvC from Proteus mirabilis (strain HI4320).